The primary structure comprises 218 residues: Glutathione S-transferase Mu 2 (218 aa).

The GST N-terminal domain maps to 2-88 (PMTLGYWNIR…YIARKHNLCG (87 aa)). 7 to 8 (YW) is a glutathione binding site. Phosphoserine is present on residues serine 27 and serine 44. Residues 43 to 46 (RSQW), lysine 50, 59 to 60 (NL), and 72 to 73 (QS) contribute to the glutathione site. The GST C-terminal domain maps to 90–208 (SEKEQIREDI…KSSRFLPRPV (119 aa)). Tyrosine 116 is a substrate binding site.

Belongs to the GST superfamily. Mu family. As to quaternary structure, homodimer. In terms of tissue distribution, muscle.

It is found in the cytoplasm. It catalyses the reaction RX + glutathione = an S-substituted glutathione + a halide anion + H(+). The catalysed reaction is 11(S)-hydroxy-14(S),15(S)-epoxy-(5Z,8Z,12E)-eicosatrienoate + glutathione = (11S,15S)-dihydroxy-14(R)-S-glutathionyl-(5Z,8Z,12E)-eicosatrienoate. Its function is as follows. Conjugation of reduced glutathione to a wide number of exogenous and endogenous hydrophobic electrophiles. Participates in the formation of novel hepoxilin regioisomers. The chain is Glutathione S-transferase Mu 2 from Homo sapiens (Human).